A 653-amino-acid chain; its full sequence is MVLVEYLWMVIVGFIIAFILAFSVGANDVANSFGTAVGSGVVTLRQACILASIFETTGSVLLGAKVGETIRKGIIDVNLYNNTVDLLMAGEVSAMVGSAVWQLIASFLRLPISGTHCIVGATIGFSLVAIGTHGVQWMQLVKIVASWFISPLLSGLMSGALFLMIKFFILKKEDPVPNGLKALPVFYAATIGINVFSILYTGAPLLGLESFPVWATALLSIGIAIIFALIVWFFVCPWMKKKIASRLKKEGALSRISEESLDKIQDEETSVFKELPGAKGNDESALPLTSSSTDAAVASDSVSNGNTRVPYGRAASMTNGSIRSPISNGTFNFDGHTVKSDVHVYHTVHKDSGLYKDLLHNIHLDRVKTDRPAPENNYRVLRRNNSYTCYTAAICGVPVHSTFKSSDVAMPEDSEKLVGDTVSYSKKRVRYDSYSSYCNAVAEAEIEAEEGGVEMKLATDLADPNPPQDDSLEEDKEEKDKSEVHLLFHFLQILTACFGSFAHGGNDVSNAIGPLVALWLIYEQGGVMQEASTPVWLLLYGGVGICAGLWVWGRRVIQTMGKDLTPITPSSGFTIELASAFTVVVASNIGLPISTTHCKVGSVVAVGWIRSRKAVDWRLFRNIFLAWFVTVPVAGLFSAGVMAILQYGILPYV.

Residue methionine 1 is a topological domain, extracellular. The helical transmembrane segment at 2–22 (VLVEYLWMVIVGFIIAFILAF) threads the bilayer. Over 23 to 46 (SVGANDVANSFGTAVGSGVVTLRQ) the chain is Cytoplasmic. Residues 47 to 67 (ACILASIFETTGSVLLGAKVG) form a helical membrane-spanning segment. Topologically, residues 68–86 (ETIRKGIIDVNLYNNTVDL) are extracellular. Asparagine 81 carries N-linked (GlcNAc...) asparagine glycosylation. A helical transmembrane segment spans residues 87 to 107 (LMAGEVSAMVGSAVWQLIASF). The Cytoplasmic segment spans residues 108–109 (LR). A helical membrane pass occupies residues 110 to 130 (LPISGTHCIVGATIGFSLVAI). The Extracellular segment spans residues 131-142 (GTHGVQWMQLVK). Residues 143–163 (IVASWFISPLLSGLMSGALFL) form a helical membrane-spanning segment. At 164–187 (MIKFFILKKEDPVPNGLKALPVFY) the chain is on the cytoplasmic side. The helical transmembrane segment at 188–208 (AATIGINVFSILYTGAPLLGL) threads the bilayer. The Extracellular segment spans residues 209–217 (ESFPVWATA). A helical membrane pass occupies residues 218 to 238 (LLSIGIAIIFALIVWFFVCPW). The Cytoplasmic segment spans residues 239–483 (MKKKIASRLK…EDKEEKDKSE (245 aa)). A helical membrane pass occupies residues 484–504 (VHLLFHFLQILTACFGSFAHG). Topologically, residues 505-532 (GNDVSNAIGPLVALWLIYEQGGVMQEAS) are extracellular. The helical transmembrane segment at 533–553 (TPVWLLLYGGVGICAGLWVWG) threads the bilayer. Topologically, residues 554 to 572 (RRVIQTMGKDLTPITPSSG) are cytoplasmic. The chain crosses the membrane as a helical span at residues 573 to 587 (FTIELASAFTVVVAS). The Extracellular portion of the chain corresponds to 588-594 (NIGLPIS). A helical transmembrane segment spans residues 595–610 (TTHCKVGSVVAVGWIR). Topologically, residues 611–622 (SRKAVDWRLFRN) are cytoplasmic. A helical membrane pass occupies residues 623–643 (IFLAWFVTVPVAGLFSAGVMA). At 644 to 653 (ILQYGILPYV) the chain is on the extracellular side.

It belongs to the inorganic phosphate transporter (PiT) (TC 2.A.20) family. In terms of assembly, homodimer.

It is found in the cell membrane. The protein localises to the apical cell membrane. It carries out the reaction 2 Na(+)(out) + phosphate(out) = 2 Na(+)(in) + phosphate(in). Functionally, sodium-phosphate symporter which preferentially transports the monovalent form of phosphate with a stoichiometry of two sodium ions per phosphate ion. The chain is Sodium-dependent phosphate transporter 2 (slc20a2) from Xenopus tropicalis (Western clawed frog).